Here is a 198-residue protein sequence, read N- to C-terminus: Twist-related protein 1 (198 aa).

Residues 1-18 (MMQDVSSSPVSPADDSLS) show a composition bias toward low complexity. The segment at 1–101 (MMQDVSSSPV…GGGSPQSYEE (101 aa)) is disordered. Positions 34 to 43 (RGGRKRRSSR) are enriched in basic residues. Gly residues-rich tracts occupy residues 46–64 (AGGGAGPGGAAGGVGGGDE) and 79–95 (GCGGGAGGGGSSSGGGS). The 52-residue stretch at 104–155 (TQRVMANVRERQRTQSLNEAFAALRKIIPTLPSDKLSKIQTLKLAARYIDFL) folds into the bHLH domain. The tract at residues 157–187 (QVLQSDELDSKMASCSYVAHERLSYAFSVWR) is sufficient for transactivation activity.

Efficient DNA binding requires dimerization with another bHLH protein. Homodimer or heterodimer with E proteins such as TCF3. ID1 binds preferentially to TCF3 but does not interact efficiently with TWIST1 so ID1 levels control the amount of TCF3 available to dimerize with TWIST and thus determine the type of dimer formed.

It is found in the nucleus. Its function is as follows. Acts as a transcriptional regulator. Inhibits myogenesis by sequestrating E proteins, inhibiting trans-activation by MEF2, and inhibiting DNA-binding by MYOD1 through physical interaction. This interaction probably involves the basic domains of both proteins. Also represses expression of pro-inflammatory cytokines such as TNFA and IL1B. Regulates cranial suture patterning and fusion. Activates transcription as a heterodimer with E proteins. Regulates gene expression differentially, depending on dimer composition. Homodimers induce expression of FGFR2 and POSTN while heterodimers repress FGFR2 and POSTN expression and induce THBS1 expression. Heterodimerization is also required for osteoblast differentiation. Represses the activity of the circadian transcriptional activator: NPAS2-BMAL1 heterodimer. The protein is Twist-related protein 1 (TWIST1) of Eulemur fulvus fulvus (Brown lemur).